Here is a 138-residue protein sequence, read N- to C-terminus: Small ribosomal subunit protein bS6 (138 aa).

Over residues 97–121 the composition is skewed to basic and acidic residues; the sequence is TEQSEMLKAEENRSERRERRDRPDN. Residues 97–138 form a disordered region; sequence TEQSEMLKAEENRSERRERRDRPDNTDGSNENDSDSDNNADE. Over residues 126-138 the composition is skewed to acidic residues; that stretch reads NENDSDSDNNADE.

The protein belongs to the bacterial ribosomal protein bS6 family.

Binds together with bS18 to 16S ribosomal RNA. This Stutzerimonas stutzeri (strain A1501) (Pseudomonas stutzeri) protein is Small ribosomal subunit protein bS6.